The primary structure comprises 232 residues: Probable phospholipid hydroperoxide glutathione peroxidase 6, mitochondrial (232 aa).

The N-terminal 54 residues, 1–54 (MLRSSIRLLYIRRTSPLLRSLSSSSSSSSSKRFDSAKPLFNSHRIISLPISTTG), are a transit peptide targeting the mitochondrion. C105 is an active-site residue.

It belongs to the glutathione peroxidase family. Expressed at a low but detectable level in leaves, stems, and flowers, but at a higher level in siliques and even higher in roots. Predominantly expressed in seeds.

It is found in the mitochondrion. It carries out the reaction a hydroperoxy polyunsaturated fatty acid + 2 glutathione = a hydroxy polyunsaturated fatty acid + glutathione disulfide + H2O. Its function is as follows. Protects cells and enzymes from oxidative damage, by catalyzing the reduction of hydrogen peroxide, lipid peroxides and organic hydroperoxide, by glutathione. This chain is Probable phospholipid hydroperoxide glutathione peroxidase 6, mitochondrial (GPX6), found in Arabidopsis thaliana (Mouse-ear cress).